A 425-amino-acid chain; its full sequence is Enolase (425 aa).

Q162 is a binding site for (2R)-2-phosphoglycerate. Catalysis depends on E204, which acts as the Proton donor. Mg(2+) contacts are provided by D241, E282, and D309. (2R)-2-phosphoglycerate is bound by residues K334, R363, S364, and K385. The Proton acceptor role is filled by K334.

Belongs to the enolase family. Mg(2+) serves as cofactor.

It is found in the cytoplasm. Its subcellular location is the secreted. The protein localises to the cell surface. It catalyses the reaction (2R)-2-phosphoglycerate = phosphoenolpyruvate + H2O. Its pathway is carbohydrate degradation; glycolysis; pyruvate from D-glyceraldehyde 3-phosphate: step 4/5. Its function is as follows. Catalyzes the reversible conversion of 2-phosphoglycerate (2-PG) into phosphoenolpyruvate (PEP). It is essential for the degradation of carbohydrates via glycolysis. This is Enolase from Micrococcus luteus (strain ATCC 4698 / DSM 20030 / JCM 1464 / CCM 169 / CCUG 5858 / IAM 1056 / NBRC 3333 / NCIMB 9278 / NCTC 2665 / VKM Ac-2230) (Micrococcus lysodeikticus).